Reading from the N-terminus, the 179-residue chain is 6,7-dimethyl-8-ribityllumazine synthase (179 aa).

Residues Trp-13, 45 to 47, and 68 to 70 contribute to the 5-amino-6-(D-ribitylamino)uracil site; these read AVE and VVI. 73 to 74 provides a ligand contact to (2S)-2-hydroxy-3-oxobutyl phosphate; the sequence is DT. His-76 serves as the catalytic Proton donor. Position 101 (Phe-101) interacts with 5-amino-6-(D-ribitylamino)uracil. Arg-115 provides a ligand contact to (2S)-2-hydroxy-3-oxobutyl phosphate. Residues 157-179 are disordered; that stretch reads AKAAKKPAKAAAKTQKKKKKVRK.

Belongs to the DMRL synthase family.

It carries out the reaction (2S)-2-hydroxy-3-oxobutyl phosphate + 5-amino-6-(D-ribitylamino)uracil = 6,7-dimethyl-8-(1-D-ribityl)lumazine + phosphate + 2 H2O + H(+). The protein operates within cofactor biosynthesis; riboflavin biosynthesis; riboflavin from 2-hydroxy-3-oxobutyl phosphate and 5-amino-6-(D-ribitylamino)uracil: step 1/2. Its function is as follows. Catalyzes the formation of 6,7-dimethyl-8-ribityllumazine by condensation of 5-amino-6-(D-ribitylamino)uracil with 3,4-dihydroxy-2-butanone 4-phosphate. This is the penultimate step in the biosynthesis of riboflavin. The polypeptide is 6,7-dimethyl-8-ribityllumazine synthase (Bdellovibrio bacteriovorus (strain ATCC 15356 / DSM 50701 / NCIMB 9529 / HD100)).